We begin with the raw amino-acid sequence, 263 residues long: Dermonecrotic toxin SpaSicTox-betaIF1 (263 aa).

2 residues coordinate Mg(2+): Glu15 and Asp17. The active-site Nucleophile is His31. 2 disulfides stabilise this stretch: Cys35/Cys41 and Cys37/Cys179. Residue Asp75 coordinates Mg(2+).

It belongs to the arthropod phospholipase D family. Class II subfamily. Mg(2+) is required as a cofactor. In terms of tissue distribution, expressed by the venom gland.

It is found in the secreted. It carries out the reaction an N-(acyl)-sphingosylphosphocholine = an N-(acyl)-sphingosyl-1,3-cyclic phosphate + choline. The enzyme catalyses an N-(acyl)-sphingosylphosphoethanolamine = an N-(acyl)-sphingosyl-1,3-cyclic phosphate + ethanolamine. The catalysed reaction is a 1-acyl-sn-glycero-3-phosphocholine = a 1-acyl-sn-glycero-2,3-cyclic phosphate + choline. It catalyses the reaction a 1-acyl-sn-glycero-3-phosphoethanolamine = a 1-acyl-sn-glycero-2,3-cyclic phosphate + ethanolamine. Its function is as follows. Dermonecrotic toxins cleave the phosphodiester linkage between the phosphate and headgroup of certain phospholipids (sphingolipid and lysolipid substrates), forming an alcohol (often choline) and a cyclic phosphate. This toxin acts on sphingomyelin (SM). It may also act on ceramide phosphoethanolamine (CPE), lysophosphatidylcholine (LPC) and lysophosphatidylethanolamine (LPE), but not on lysophosphatidylserine (LPS), and lysophosphatidylglycerol (LPG). It acts by transphosphatidylation, releasing exclusively cyclic phosphate products as second products. Induces dermonecrosis, hemolysis, increased vascular permeability, edema, inflammatory response, and platelet aggregation. In Sicarius patagonicus (Six-eyed sand spider), this protein is Dermonecrotic toxin SpaSicTox-betaIF1.